Reading from the N-terminus, the 489-residue chain is Probable anthranilate synthase component 1 (489 aa).

L-tryptophan contacts are provided by residues Ser54 and 262 to 264 (PYM). Chorismate is bound at residue 297-298 (GT). Mg(2+) is bound at residue Glu324. A phosphoserine mark is found at Ser390 and Ser392. Chorismate contacts are provided by residues Tyr412, Arg433, 447–449 (GGG), and Gly449. Glu462 provides a ligand contact to Mg(2+). Ser488 carries the post-translational modification Phosphoserine.

This sequence belongs to the anthranilate synthase component I family. As to quaternary structure, tetramer of two components I and two components II. The cofactor is Mg(2+).

It carries out the reaction chorismate + L-glutamine = anthranilate + pyruvate + L-glutamate + H(+). It participates in amino-acid biosynthesis; L-tryptophan biosynthesis; L-tryptophan from chorismate: step 1/5. This chain is Probable anthranilate synthase component 1 (trp3), found in Schizosaccharomyces pombe (strain 972 / ATCC 24843) (Fission yeast).